Here is a 312-residue protein sequence, read N- to C-terminus: DNA-directed RNA polymerase subunit alpha (312 aa).

Residues 1-226 (MIEFEKPNIT…EHFKVFESAD (226 aa)) are alpha N-terminal domain (alpha-NTD). Positions 243–312 (KEKKLEMTIE…DLGLSLRQED (70 aa)) are alpha C-terminal domain (alpha-CTD).

Belongs to the RNA polymerase alpha chain family. As to quaternary structure, homodimer. The RNAP catalytic core consists of 2 alpha, 1 beta, 1 beta' and 1 omega subunit. When a sigma factor is associated with the core the holoenzyme is formed, which can initiate transcription.

It catalyses the reaction RNA(n) + a ribonucleoside 5'-triphosphate = RNA(n+1) + diphosphate. Functionally, DNA-dependent RNA polymerase catalyzes the transcription of DNA into RNA using the four ribonucleoside triphosphates as substrates. This is DNA-directed RNA polymerase subunit alpha from Lactobacillus acidophilus (strain ATCC 700396 / NCK56 / N2 / NCFM).